The chain runs to 963 residues: MATQSYVTELQAAPQASQPPQAPPQALPQPPPPAAPQPPAAATPQPQYVTELQSPQPQTQPPGSQKQYVAELPAAPAPSQPATPAPSPVAQQYIVVTVSEGAMRASETVSEASPSSTASQTGVPTQVVQQVQGTQQRLLVQASVQAKPGHVSPLQLTNIQVPQQAIPTQHLVVQSPAPGTKSGQVSLTVHSAQQVHSAPERSPVQANNSTSKTAGTPAATVQQLQVHSVQQSVPVTQERSVVQATPQTKAGPVQQLTVQGLQPVHVAQEVQQLPQVPVPHVYSSQVQYVEGGDASYTASAIRSSTYQYPETPIYTQTAGTSYYEASGTAAQVSTPATSQTVASSGSVPMYVSGSPIVASSSSSEAGASNSSVGAGGNGGGGSSGGGSGGSSGSGAGTYVIQGGYMLGNASQSYSHTTRASPATVQWLLDNYETAEGVSLPRSTLYCHYLLHCQEQKLEPVNAASFGKLIRSVFMGLRTRRLGTRGNSKYHYYGLRIKASSPLLRLMEDQQHMAMRGQPFSQKQRLKPIQKMEGVANGVAVGQQSTGLSDISAQVQQYQQFLDASRSLPDFAELDLQGKVLPEGVGPGDIKAFQVLYREHCEAIVDVMVNLQFTLVETLWKTFWRYNLSQPSEAPPLAVHDEAEKRLPRASLVLLSKFQPVLQWTKHCDNVLYQGLVEILIPDVLRPIPSALTQAIRNFAKSLESWLTHAMVNIPEEMLRVKVAAAGAFAQTLRRYTSLNHLAQAARAVLQNTAQINQMLSDLNRVDFANVQEQASWVCRCEDRVVQRLEQDFKVTLQQQNSLEQWAAWLDGVVSQVLKPYQGSSGFPKAAKLFLLKWSFYSSMVIRDLTLRSAASFGSFHLIRLLYDEYMYYLIEHRVAQAKGETPIAVMGEFANLATSLNPLDPDKDEEEEEEEESEDELPQDISLAAGSESPALGPEALEPPAKLARTDTRGLFVQALPSS.

Disordered stretches follow at residues 1 to 88 (MATQ…APSP), 105 to 126 (ASETVSEASPSSTASQTGVPTQ), 174 to 218 (QSPA…GTPA), and 361 to 392 (SSSEAGASNSSVGAGGNGGGGSSGGGSGGSSG). A compositionally biased stretch (pro residues) spans 20–41 (PQAPPQALPQPPPPAAPQPPAA). Positions 42 to 67 (ATPQPQYVTELQSPQPQTQPPGSQKQ) are enriched in low complexity. The residue at position 54 (Ser-54) is a Phosphoserine. Residues 75–87 (APAPSQPATPAPS) are compositionally biased toward pro residues. Polar residues-rich tracts occupy residues 107 to 119 (ETVSEASPSSTAS), 181 to 196 (KSGQVSLTVHSAQQVH), and 204 to 214 (VQANNSTSKTA). Over residues 361–372 (SSSEAGASNSSV) the composition is skewed to low complexity. Residues 373-392 (GAGGNGGGGSSGGGSGGSSG) are compositionally biased toward gly residues. The RFX-type winged-helix DNA-binding region spans 423 to 498 (TVQWLLDNYE…YHYYGLRIKA (76 aa)). A disordered region spans residues 899–948 (SLNPLDPDKDEEEEEEEESEDELPQDISLAAGSESPALGPEALEPPAKLA). The span at 906 to 922 (DKDEEEEEEEESEDELP) shows a compositional bias: acidic residues. Residues 932 to 947 (ESPALGPEALEPPAKL) are compositionally biased toward low complexity. Ser-962 and Ser-963 each carry phosphoserine.

It belongs to the RFX family. In terms of assembly, homodimer; binds DNA as a homodimer. Heterodimer; heterodimerizes with RFX2 and RFX3.

The protein localises to the nucleus. Its function is as follows. Regulatory factor essential for MHC class II genes expression. Binds to the X boxes of MHC class II genes. This chain is MHC class II regulatory factor RFX1 (Rfx1), found in Mus musculus (Mouse).